The primary structure comprises 321 residues: D-alanine--D-alanine ligase (321 aa).

The ATP-grasp domain maps to 121–315 (RIWFLTNNIN…FTNLIEEIIK (195 aa)). Residue 147 to 199 (PMKRPYVIKPLTQGSSIGVEVIFAEDDFNFADYDFPYGDQVIIEQYIKGRELQ) participates in ATP binding. 3 residues coordinate Mg(2+): Glu268, Glu282, and Asn284.

This sequence belongs to the D-alanine--D-alanine ligase family. Mg(2+) is required as a cofactor. Mn(2+) serves as cofactor.

The protein localises to the cytoplasm. The enzyme catalyses 2 D-alanine + ATP = D-alanyl-D-alanine + ADP + phosphate + H(+). Its pathway is cell wall biogenesis; peptidoglycan biosynthesis. In terms of biological role, cell wall formation. This Rickettsia rickettsii (strain Iowa) protein is D-alanine--D-alanine ligase.